Reading from the N-terminus, the 328-residue chain is Malate dehydrogenase (328 aa).

11–17 is a binding site for NAD(+); the sequence is GAAGQIG. 2 residues coordinate substrate: arginine 94 and arginine 100. NAD(+) is bound by residues asparagine 107, glutamine 114, and 131-133; that span reads VGN. Residues asparagine 133 and arginine 164 each contribute to the substrate site. The active-site Proton acceptor is the histidine 189.

It belongs to the LDH/MDH superfamily. MDH type 2 family.

The catalysed reaction is (S)-malate + NAD(+) = oxaloacetate + NADH + H(+). Functionally, catalyzes the reversible oxidation of malate to oxaloacetate. In Acinetobacter baumannii (strain SDF), this protein is Malate dehydrogenase.